The chain runs to 93 residues: UPF0358 protein lmo1070 (93 aa).

The protein belongs to the UPF0358 family.

This chain is UPF0358 protein lmo1070, found in Listeria monocytogenes serovar 1/2a (strain ATCC BAA-679 / EGD-e).